We begin with the raw amino-acid sequence, 632 residues long: Probable potassium transport system protein Kup (632 aa).

Transmembrane regions (helical) follow at residues Leu17 to Leu37, Leu60 to Leu80, Thr106 to Ile126, Leu146 to Ser166, Phe175 to Ile195, Ala210 to Leu230, Trp254 to Leu274, Ala292 to Ile312, Ile344 to Phe364, Leu370 to Phe390, Leu401 to Ala421, and Ile426 to Thr446.

The protein belongs to the HAK/KUP transporter (TC 2.A.72) family.

The protein localises to the cell inner membrane. It carries out the reaction K(+)(in) + H(+)(in) = K(+)(out) + H(+)(out). Functionally, transport of potassium into the cell. Likely operates as a K(+):H(+) symporter. The sequence is that of Probable potassium transport system protein Kup from Rhizobium rhizogenes (Agrobacterium rhizogenes).